Consider the following 366-residue polypeptide: MSEDSNPKNDLKLKMYETFRSHIERAENSFWTYMLFYLQFLVGINGAVGILCRYLSNNLQNFPTEIIIAFLALVNILLSLIGIIVIIERGKWFFRNMILTVNLERYILKEEHIKIIPKRYSKFDNFNKVIDTTGRIFISIFIGIYMISVIALGYLANSCKTIILFGTGFFIIVVIIYFLDLLDWIYRRIDSNEYRKVIGVVLFISFIPPLMNYFIYDIINLICSYIPESFIVAMIVILIFVIIDVYYNAKKHIENTIIMLSLERTVNDIDDIIKILKNIRLDDTKKEELKKKLRKIKKLIENVIKLLGGTSENGTQNNNLEEAKSKITEACRKISGNNIFEAINELNEAKYIINNKINELTQSDSS.

Helical transmembrane passes span 30 to 50 (FWTY…AVGI), 66 to 86 (IIIA…IIVI), 136 to 156 (IFIS…GYLA), 162 to 182 (IILF…LDLL), 198 to 218 (IGVV…IYDI), and 225 to 245 (YIPE…IIDV).

Its subcellular location is the cell membrane. This is an uncharacterized protein from Methanocaldococcus jannaschii (strain ATCC 43067 / DSM 2661 / JAL-1 / JCM 10045 / NBRC 100440) (Methanococcus jannaschii).